We begin with the raw amino-acid sequence, 147 residues long: uncharacterized protein (147 aa).

The 104-residue stretch at L44–I147 folds into the HTH LytTR-type domain.

The protein localises to the cytoplasm. This is an uncharacterized protein from Staphylococcus aureus (strain bovine RF122 / ET3-1).